The sequence spans 216 residues: MOB kinase activator 3C (216 aa).

Zn(2+)-binding residues include Cys-82, Cys-87, His-164, and His-169.

Belongs to the MOB1/phocein family.

In terms of biological role, may regulate the activity of kinases. This Mus musculus (Mouse) protein is MOB kinase activator 3C (Mob3c).